A 226-amino-acid polypeptide reads, in one-letter code: 7-cyano-7-deazaguanine synthase (226 aa).

Residue 9-19 (LSGGLDSATVL) participates in ATP binding. The Zn(2+) site is built by Cys-189, Cys-199, Cys-202, and Cys-205.

This sequence belongs to the QueC family. Requires Zn(2+) as cofactor.

It catalyses the reaction 7-carboxy-7-deazaguanine + NH4(+) + ATP = 7-cyano-7-deazaguanine + ADP + phosphate + H2O + H(+). It functions in the pathway purine metabolism; 7-cyano-7-deazaguanine biosynthesis. Functionally, catalyzes the ATP-dependent conversion of 7-carboxy-7-deazaguanine (CDG) to 7-cyano-7-deazaguanine (preQ(0)). This is 7-cyano-7-deazaguanine synthase from Cupriavidus pinatubonensis (strain JMP 134 / LMG 1197) (Cupriavidus necator (strain JMP 134)).